A 365-amino-acid polypeptide reads, in one-letter code: MNIMDFNVKKLAADAGTFLSRAVQFTEEKLGQAEKTELDAHLENLLSKAECTKVWTEKIMKQTEVLLQPNPNARIEEFVYEKLDRKAPSRINNPELLGQYMIDAGTEFGPGTAYGNALIKCGETQKRIGTADRELIQTSALNFLTPLRNFIEGDYKTIAKERKLLQNKRLDLDAAKTRLKKAKAAETKSSSEQELRITQSEFDRQAEITRLLLEGISSTHAHHLRCLNDFVEAQMTYYAQCYQYMLDLQKQLGSFPSNYVSNNNQTSGTPVPYTLSNTIGPSAVASTGSLVITCPPNLSDLKDSSSTRKARVLYDYDAANSTELSLLADEVITVFSVVGMDSDWLMGERGNQKGKVPITYLELLN.

At M1 the chain carries N-acetylmethionine. Residues 1–30 are membrane-binding amphipathic helix; that stretch reads MNIMDFNVKKLAADAGTFLSRAVQFTEEKL. Positions 1–37 are required for membrane binding; it reads MNIMDFNVKKLAADAGTFLSRAVQFTEEKLGQAEKTE. In terms of domain architecture, BAR spans 27–261; it reads EEKLGQAEKT…LGSFPSNYVS (235 aa). T145 is subject to Phosphothreonine; by CDK5. Residues 156–185 adopt a coiled-coil conformation; the sequence is KTIAKERKLLQNKRLDLDAAKTRLKKAKAA. Residues 305 to 365 form the SH3 domain; it reads SSTRKARVLY…VPITYLELLN (61 aa).

This sequence belongs to the endophilin family. In terms of assembly, homodimer, and heterodimer with SH3GLB2. Binds BAX; induction of apoptosis augments BAX binding. Binds DNM1, HTT, AMPH, BIN1 and ARFGAP1. Interacts with UVRAG; UVRAG bridges the interaction to BECN1 indicative for an association with the PI3K complex II (PI3KC3-C2). Post-translationally, phosphorylated at Thr-145 by CDK5; this phosphorylation is required for autophagy induction in starved neurons and facilitates homodimerization. As to expression, expressed in brain, heart, lung and spleen. Low level in liver and testis.

It is found in the cytoplasm. Its subcellular location is the golgi apparatus membrane. The protein resides in the mitochondrion outer membrane. It localises to the cytoplasmic vesicle. The protein localises to the autophagosome membrane. It is found in the midbody. Its function is as follows. May be required for normal outer mitochondrial membrane dynamics. Required for coatomer-mediated retrograde transport in certain cells. May recruit other proteins to membranes with high curvature. May promote membrane fusion. Involved in activation of caspase-dependent apoptosis by promoting BAX/BAK1 activation. Involved in caspase-independent apoptosis during nutrition starvation and involved in the regulation of autophagy. Activates lipid kinase activity of PIK3C3 during autophagy probably by associating with the PI3K complex II (PI3KC3-C2). Associated with PI3KC3-C2 during autophagy may regulate the trafficking of ATG9A from the Golgi complex to the peripheral cytoplasm for the formation of autophagosomes by inducing Golgi membrane tubulation and fragmentation. Involved in regulation of degradative endocytic trafficking and cytokinesis, probably in the context of PI3KC3-C2. The polypeptide is Endophilin-B1 (Rattus norvegicus (Rat)).